A 126-amino-acid polypeptide reads, in one-letter code: Small ribosomal subunit protein uS13 (126 aa).

Positions 95–126 (GLPVRGQRTQTNARTRKGKKKTVAGKKKAGRK) are disordered. Positions 108–126 (RTRKGKKKTVAGKKKAGRK) are enriched in basic residues.

Belongs to the universal ribosomal protein uS13 family. In terms of assembly, part of the 30S ribosomal subunit. Forms a loose heterodimer with protein S19. Forms two bridges to the 50S subunit in the 70S ribosome.

Functionally, located at the top of the head of the 30S subunit, it contacts several helices of the 16S rRNA. In the 70S ribosome it contacts the 23S rRNA (bridge B1a) and protein L5 of the 50S subunit (bridge B1b), connecting the 2 subunits; these bridges are implicated in subunit movement. Contacts the tRNAs in the A and P-sites. This chain is Small ribosomal subunit protein uS13, found in Thermobifida fusca (strain YX).